The primary structure comprises 403 residues: Alkaline protease 1 (403 aa).

A signal peptide spans 1–21 (MQSIKRTLLLLGALLPAALAA). A propeptide spanning residues 22-125 (PAREPHPSSN…QIWYLDALTT (104 aa)) is cleaved from the precursor. The Inhibitor I9 domain maps to 36–120 (KYIITFKSGI…HVEEDQIWYL (85 aa)). The region spanning 130 to 403 (PWGLGSISHK…PNKLAYNGAA (274 aa)) is the Peptidase S8 domain. Catalysis depends on charge relay system residues Asp-162 and His-193. 2 N-linked (GlcNAc...) asparagine glycosylation sites follow: Asn-253 and Asn-307. Ser-349 serves as the catalytic Charge relay system.

The protein belongs to the peptidase S8 family.

It is found in the secreted. The catalysed reaction is Hydrolysis of proteins with broad specificity, and of Bz-Arg-OEt &gt; Ac-Tyr-OEt. Does not hydrolyze peptide amides.. Functionally, secreted alkaline protease that allows assimilation of proteinaceous substrates. This Aspergillus clavatus (strain ATCC 1007 / CBS 513.65 / DSM 816 / NCTC 3887 / NRRL 1 / QM 1276 / 107) protein is Alkaline protease 1 (alp1).